Here is a 590-residue protein sequence, read N- to C-terminus: Threonine dehydratase biosynthetic, chloroplastic (590 aa).

The transit peptide at 1 to 44 directs the protein to the chloroplast; sequence MLSTSTTNSSILPFRSRASSSTFIARPPANFNSIFTTSVRVFPI. Residue K139 is modified to N6-(pyridoxal phosphate)lysine. ACT-like domains follow at residues 416–488 and 509–580; these read ALLG…NISH and EVFV…IDQY.

It belongs to the serine/threonine dehydratase family. Pyridoxal 5'-phosphate serves as cofactor. In terms of tissue distribution, found at higher levels in flowers than in other organs.

It is found in the plastid. The protein localises to the chloroplast. It carries out the reaction L-threonine = 2-oxobutanoate + NH4(+). Its pathway is amino-acid biosynthesis; L-isoleucine biosynthesis; 2-oxobutanoate from L-threonine: step 1/1. Allosterically inhibited by isoleucine. The protein is Threonine dehydratase biosynthetic, chloroplastic of Cicer arietinum (Chickpea).